Reading from the N-terminus, the 507-residue chain is Light-independent protochlorophyllide reductase subunit B (507 aa).

D36 is a [4Fe-4S] cluster binding site. Catalysis depends on D293, which acts as the Proton donor. 428–429 (GM) is a substrate binding site.

This sequence belongs to the ChlB/BchB/BchZ family. In terms of assembly, protochlorophyllide reductase is composed of three subunits; ChlL, ChlN and ChlB. Forms a heterotetramer of two ChlB and two ChlN subunits. [4Fe-4S] cluster is required as a cofactor.

The protein localises to the plastid. It localises to the chloroplast. The enzyme catalyses chlorophyllide a + oxidized 2[4Fe-4S]-[ferredoxin] + 2 ADP + 2 phosphate = protochlorophyllide a + reduced 2[4Fe-4S]-[ferredoxin] + 2 ATP + 2 H2O. Its pathway is porphyrin-containing compound metabolism; chlorophyll biosynthesis (light-independent). In terms of biological role, component of the dark-operative protochlorophyllide reductase (DPOR) that uses Mg-ATP and reduced ferredoxin to reduce ring D of protochlorophyllide (Pchlide) to form chlorophyllide a (Chlide). This reaction is light-independent. The NB-protein (ChlN-ChlB) is the catalytic component of the complex. In Porphyra purpurea (Red seaweed), this protein is Light-independent protochlorophyllide reductase subunit B.